Consider the following 251-residue polypeptide: Hydroxyacylglutathione hydrolase (251 aa).

Residues histidine 53, histidine 55, aspartate 57, histidine 58, histidine 110, aspartate 127, and histidine 165 each coordinate Zn(2+).

It belongs to the metallo-beta-lactamase superfamily. Glyoxalase II family. In terms of assembly, monomer. The cofactor is Zn(2+).

The enzyme catalyses an S-(2-hydroxyacyl)glutathione + H2O = a 2-hydroxy carboxylate + glutathione + H(+). It participates in secondary metabolite metabolism; methylglyoxal degradation; (R)-lactate from methylglyoxal: step 2/2. Thiolesterase that catalyzes the hydrolysis of S-D-lactoyl-glutathione to form glutathione and D-lactic acid. The polypeptide is Hydroxyacylglutathione hydrolase (Yersinia pestis).